The primary structure comprises 282 residues: Bifunctional protein FolD (282 aa).

NADP(+)-binding positions include 165-167 (NRS), Ser190, and Ile231.

Belongs to the tetrahydrofolate dehydrogenase/cyclohydrolase family. In terms of assembly, homodimer.

It carries out the reaction (6R)-5,10-methylene-5,6,7,8-tetrahydrofolate + NADP(+) = (6R)-5,10-methenyltetrahydrofolate + NADPH. The enzyme catalyses (6R)-5,10-methenyltetrahydrofolate + H2O = (6R)-10-formyltetrahydrofolate + H(+). It functions in the pathway one-carbon metabolism; tetrahydrofolate interconversion. Catalyzes the oxidation of 5,10-methylenetetrahydrofolate to 5,10-methenyltetrahydrofolate and then the hydrolysis of 5,10-methenyltetrahydrofolate to 10-formyltetrahydrofolate. This is Bifunctional protein FolD from Clostridium botulinum (strain Kyoto / Type A2).